A 263-amino-acid chain; its full sequence is Tryptophan synthase alpha chain (263 aa).

Active-site proton acceptor residues include glutamate 47 and aspartate 58.

The protein belongs to the TrpA family. As to quaternary structure, tetramer of two alpha and two beta chains.

It is found in the plastid. Its subcellular location is the chloroplast. It catalyses the reaction (1S,2R)-1-C-(indol-3-yl)glycerol 3-phosphate + L-serine = D-glyceraldehyde 3-phosphate + L-tryptophan + H2O. The protein operates within amino-acid biosynthesis; L-tryptophan biosynthesis; L-tryptophan from chorismate: step 5/5. Functionally, the alpha subunit is responsible for the aldol cleavage of indoleglycerol phosphate to indole and glyceraldehyde 3-phosphate. The sequence is that of Tryptophan synthase alpha chain from Pyropia yezoensis (Susabi-nori).